The primary structure comprises 508 residues: NADH-quinone oxidoreductase subunit N 2 (508 aa).

14 helical membrane-spanning segments follow: residues 14 to 34 (SYVAILPHLIVTATLLVVIVL), 43 to 63 (SLVWVTLGGVVLAMLSIWYTA), 90 to 110 (FTFFMNGVLLGIAALVILLSA), 119 to 139 (GAHMEFYEIILAVTLGMMFMV), 144 to 164 (LLTIYIGLELTSISSYVLAGI), 179 to 199 (FLTGATASAVLLFGLSLIYGV), 223 to 243 (GPALTPLLVAGMAFLMVGFGF), 275 to 295 (GAAMAAILRVFVGGLGVAPFT), 298 to 318 (WALIWALAAAASMTVGNLVAL), 327 to 347 (MAYSSIAQAGYILVGVAASGL), 353 to 373 (ISSVLFYVMAYAVTNLGIFAV), 400 to 420 (AWALLLFFVSLIGIPPTVGFL), 433 to 455 (GYLWLAVLMAVNSVISVGYYYRV), and 473 to 493 (TGISATVLLSLLGVVALTIFA).

It belongs to the complex I subunit 2 family. As to quaternary structure, NDH-1 is composed of 14 different subunits. Subunits NuoA, H, J, K, L, M, N constitute the membrane sector of the complex.

Its subcellular location is the cell membrane. It catalyses the reaction a quinone + NADH + 5 H(+)(in) = a quinol + NAD(+) + 4 H(+)(out). In terms of biological role, NDH-1 shuttles electrons from NADH, via FMN and iron-sulfur (Fe-S) centers, to quinones in the respiratory chain. The immediate electron acceptor for the enzyme in this species is believed to be a menaquinone. Couples the redox reaction to proton translocation (for every two electrons transferred, four hydrogen ions are translocated across the cytoplasmic membrane), and thus conserves the redox energy in a proton gradient. This is NADH-quinone oxidoreductase subunit N 2 from Symbiobacterium thermophilum (strain DSM 24528 / JCM 14929 / IAM 14863 / T).